Reading from the N-terminus, the 334-residue chain is Chemotactic signal transduction system substrate-binding protein CosB (334 aa).

Residues 1-29 form the signal peptide; it reads MMDTPEHASTSSRRQLLGMLAAGGTTAVA.

It belongs to the OsmX family.

Its subcellular location is the cell membrane. Mediates chemotaxis towards compatible osmolytes. May function as a receptor that binds the osmolytes and transduces a signal to CosT. Has probably no additional role in transport. This chain is Chemotactic signal transduction system substrate-binding protein CosB (cosB), found in Halobacterium salinarum (strain ATCC 29341 / DSM 671 / R1).